The sequence spans 110 residues: Keratin-associated protein 6-3 (110 aa).

This sequence belongs to the KRTAP type 6 family. As to quaternary structure, interacts with hair keratins.

In the hair cortex, hair keratin intermediate filaments are embedded in an interfilamentous matrix, consisting of hair keratin-associated proteins (KRTAP), which are essential for the formation of a rigid and resistant hair shaft through their extensive disulfide bond cross-linking with abundant cysteine residues of hair keratins. The matrix proteins include the high-sulfur and high-glycine-tyrosine keratins. In Homo sapiens (Human), this protein is Keratin-associated protein 6-3.